The chain runs to 377 residues: Homoserine O-acetyltransferase (377 aa).

The AB hydrolase-1 domain maps to 47–355; it reads NAILICHALT…DYGHDAFLLE (309 aa). The active-site Nucleophile is the S153. R222 contributes to the substrate binding site. Active-site residues include D316 and H349. Position 350 (D350) interacts with substrate.

This sequence belongs to the AB hydrolase superfamily. MetX family. In terms of assembly, homodimer.

Its subcellular location is the cytoplasm. It catalyses the reaction L-homoserine + acetyl-CoA = O-acetyl-L-homoserine + CoA. It functions in the pathway amino-acid biosynthesis; L-methionine biosynthesis via de novo pathway; O-acetyl-L-homoserine from L-homoserine: step 1/1. Transfers an acetyl group from acetyl-CoA to L-homoserine, forming acetyl-L-homoserine. The protein is Homoserine O-acetyltransferase of Deferribacter desulfuricans (strain DSM 14783 / JCM 11476 / NBRC 101012 / SSM1).